The sequence spans 355 residues: Carbohydrate sulfotransferase 10 (355 aa).

Over 1 to 6 the chain is Cytoplasmic; sequence MHHRWL. The helical; Signal-anchor for type II membrane protein transmembrane segment at 7–27 threads the bilayer; it reads LLVACFWVLFMLMVASKLITL. Residues 28-355 lie on the Lumenal side of the membrane; it reads TMKDPEGYGN…FGYKEPTFLF (328 aa). 2 N-linked (GlcNAc...) asparagine glycosylation sites follow: Asn-93 and Asn-98. 3'-phosphoadenylyl sulfate contacts are provided by residues 126-132 and 188-196; these read PKVGNTQ and RDPFERLIS. N-linked (GlcNAc...) asparagine glycosylation occurs at Asn-316.

This sequence belongs to the sulfotransferase 2 family.

The protein resides in the golgi apparatus membrane. Functionally, catalyzes the transfer of sulfate to position 3 of terminal glucuronic acid of both protein- and lipid-linked oligosaccharides. Participates in biosynthesis of HNK-1 carbohydrate structure, a sulfated glucuronyl-lactosaminyl residue carried by many neural recognition molecules. The sequence is that of Carbohydrate sulfotransferase 10 (chst10) from Xenopus laevis (African clawed frog).